The chain runs to 585 residues: Putative phospholipase B-like 2 (585 aa).

Positions 1–35 (MAAPMDRTHGGRAARALRRALALASLAGLLLSGLA) are cleaved as a signal peptide. Residues Asn-84, Asn-102, and Asn-106 are each glycosylated (N-linked (GlcNAc...) asparagine). Cysteines 138 and 148 form a disulfide. N-linked (GlcNAc...) asparagine glycosylation is found at Asn-227 and Asn-432. Cys-488 and Cys-491 are joined by a disulfide. N-linked (GlcNAc...) asparagine glycosylation is present at Asn-511.

It belongs to the phospholipase B-like family. Interacts with IGF2R. Glycosylated; contains mannose 6-phosphate sugars.

It is found in the lysosome lumen. Its function is as follows. Putative phospholipase. The chain is Putative phospholipase B-like 2 (Plbd2) from Rattus norvegicus (Rat).